The chain runs to 173 residues: Helix-loop-helix protein lin-22 (173 aa).

The tract at residues 21-34 (KKIKNKPLMEKKRR) is basic motif. One can recognise a bHLH domain in the interval 21-78 (KKIKNKPLMEKKRRARINKSLSQLKQILIQDEHKNSIQHSKWEKADILEMAVEYLQQL). A helix-loop-helix motif region spans residues 35-78 (ARINKSLSQLKQILIQDEHKNSIQHSKWEKADILEMAVEYLQQL). Residues 83-95 (PCSLSPSTSSIST) are compositionally biased toward low complexity. The segment at 83 to 102 (PCSLSPSTSSISTPPTPKEE) is disordered.

As to expression, expressed mostly in the seam (stem) cells and hypodermis (hyp7), but also to a lesser extent in the intestine.

The protein resides in the nucleus. Probable transcription factor. During development, required for cell fate specification, probably by promoting or repressing expression of genes involved in specific cell fate. Involved in specifying lineages derived from the epidermal stem cells of the lateral ectoderm, known as seam cells. Modulates symmetric divisions of seam cells, perhaps in concert with the Wnt signaling pathway. May repress expression of homeobox genes mab-5, egl-5 and lin-39. This Caenorhabditis elegans protein is Helix-loop-helix protein lin-22.